A 1828-amino-acid polypeptide reads, in one-letter code: Dedicator of cytokinesis protein 2 (1828 aa).

Residues 8 to 69 enclose the SH3 domain; it reads DKERHGVAIY…PTSFIHLKEV (62 aa). Lysine 304 is subject to N6-acetyllysine. The C2 DOCK-type domain maps to 423–607; it reads RNDIYITLLQ…DVFSISTLVC (185 aa). Residues serine 588 and serine 593 each carry the phosphoserine modification. An N6-acetyllysine modification is found at lysine 738. The DOCKER domain maps to 1210–1621; it reads YKDNNREEMY…VEKEYGVREM (412 aa). The interval 1652–1703 is disordered; that stretch reads SDCSTPSKVPAESFDLESAPPKTPKVEEEPISPGSTLPEVKLRRSKKRTKRS. 4 positions are modified to phosphoserine: serine 1683, serine 1704, serine 1729, and serine 1782.

The protein belongs to the DOCK family. Homodimer. Interacts with RAC1 and RAC2. Interacts with CRKL and VAV. Interacts with CD3Z. In terms of tissue distribution, specifically expressed in hematopoietic cells.

It is found in the endomembrane system. It localises to the cytoplasm. Its subcellular location is the cytoskeleton. Functionally, involved in cytoskeletal rearrangements required for lymphocyte migration in response of chemokines. Activates RAC1 and RAC2, but not CDC42, by functioning as a guanine nucleotide exchange factor (GEF), which exchanges bound GDP for free GTP. May also participate in IL2 transcriptional activation via the activation of RAC2. This chain is Dedicator of cytokinesis protein 2 (Dock2), found in Mus musculus (Mouse).